Consider the following 341-residue polypeptide: Hygromycin-B 4-O-kinase (341 aa).

D198 functions as the Proton acceptor in the catalytic mechanism.

This sequence belongs to the aminoglycoside phosphotransferase family.

It carries out the reaction hygromycin B + ATP = 4-O-phosphohygromycin B + ADP + H(+). In terms of biological role, the aminoglycoside phosphotransferases achieve inactivation of their antibiotic substrates by phosphorylation. Only phosphorylates hygromycin and closely related compounds such as demethyl analogs and destomycin. The protein is Hygromycin-B 4-O-kinase (hph) of Escherichia coli.